The chain runs to 624 residues: MTQAEKGEAENGKEKGGEKEKEQRGVKRPIVPALVPESLQEQIQSNFIVVIHPGSTTLRIGRATDTLPASVPHVIARRHKQQGQPLYKDSWLLREGLNKPESNEQRQNGLKMVDQAIWSKKMSNGTRRIPVSPEQARSYNKQMRPAILDHCSGNKWTNTSHHPEFLVGEEALYVNPLDCYNIHWPIRRGQLNIHPGPGGSLTAVLADIEVIWSHAIQKYLEIPLKDLKYYRCILLIPDIYNKQHVKELVNMILMKMGFSGIVVHQESVCATFGSGLSSTCIVDVGDQKTSVCCVEDGVSHRNTRLCLAYGGSDVSRCFYWLMQRAGFPYRECQLTNKMDCLLLQHLKETFCHLDQDISGLQDHEFQIRHPDSPALLYQFRLGDEKLQAPMALFYPATFGIVGQKMTTLQHRSQGDPEDPHDEQYLLATQSKQEQSAKATADRKSASKPIGFEGDLRGQSSDLPERLHSQEVDLGPSQGDCLMAGNDSEEALTALMSRKTAISLFEGKALGLDKAILHSIDCCSSDETKKKMYSSILVVGGGLMFHKAQEFLQHRILNKMPPSFRRIIENVDVITRPKDMDPRLIAWKGGAVLACLDTTQELWIYQREWQRFGVRMLRERAAFVW.

M1 carries the post-translational modification N-acetylmethionine. Residues 1–25 show a composition bias toward basic and acidic residues; sequence MTQAEKGEAENGKEKGGEKEKEQRG. The disordered stretch occupies residues 1-29; it reads MTQAEKGEAENGKEKGGEKEKEQRGVKRP. 2 residues coordinate ATP: S55 and T56. S132 is modified (phosphoserine). Position 283-286 (283-286) interacts with ATP; that stretch reads DVGD. Residue S412 is modified to Phosphoserine. Residues 430 to 462 are disordered; the sequence is SKQEQSAKATADRKSASKPIGFEGDLRGQSSDL.

The protein belongs to the actin family. ARP8 subfamily. As to quaternary structure, component of the chromatin remodeling INO80 complex; specifically part of a complex module associated with the DBINO domain of INO80. Exists as monomers and dimers, but the dimer is most probably the biologically relevant form required for stable interactions with histones that exploits the twofold symmetry of the nucleosome core.

The protein localises to the nucleus. It localises to the chromosome. Functionally, plays an important role in the functional organization of mitotic chromosomes. Exhibits low basal ATPase activity, and unable to polymerize. Proposed core component of the chromatin remodeling INO80 complex which is involved in transcriptional regulation, DNA replication and probably DNA repair. Required for the recruitment of INO80 (and probably the INO80 complex) to sites of DNA damage Strongly prefer nucleosomes and H3-H4 tetramers over H2A-H2B dimers, suggesting it may act as a nucleosome recognition module within the complex. The sequence is that of Actin-related protein 8 (ACTR8) from Bos taurus (Bovine).